A 264-amino-acid chain; its full sequence is Thymidylate synthase (264 aa).

A dUMP-binding site is contributed by Arg21. (6R)-5,10-methylene-5,6,7,8-tetrahydrofolate is bound at residue His51. A dUMP-binding site is contributed by 126–127 (RR). Cys146 serves as the catalytic Nucleophile. DUMP-binding positions include 166-169 (RSCD), Asn177, and 207-209 (HLY). Asp169 lines the (6R)-5,10-methylene-5,6,7,8-tetrahydrofolate pocket. Position 263 (Ser263) interacts with (6R)-5,10-methylene-5,6,7,8-tetrahydrofolate.

This sequence belongs to the thymidylate synthase family. Bacterial-type ThyA subfamily. Homodimer.

Its subcellular location is the cytoplasm. The catalysed reaction is dUMP + (6R)-5,10-methylene-5,6,7,8-tetrahydrofolate = 7,8-dihydrofolate + dTMP. Its pathway is pyrimidine metabolism; dTTP biosynthesis. Functionally, catalyzes the reductive methylation of 2'-deoxyuridine-5'-monophosphate (dUMP) to 2'-deoxythymidine-5'-monophosphate (dTMP) while utilizing 5,10-methylenetetrahydrofolate (mTHF) as the methyl donor and reductant in the reaction, yielding dihydrofolate (DHF) as a by-product. This enzymatic reaction provides an intracellular de novo source of dTMP, an essential precursor for DNA biosynthesis. This is Thymidylate synthase from Buchnera aphidicola subsp. Acyrthosiphon pisum (strain APS) (Acyrthosiphon pisum symbiotic bacterium).